We begin with the raw amino-acid sequence, 316 residues long: MTQGKLSVANKAPGTEGQQQVHGEKKEAPAVPSAPPSYEEATSGEGMKAGAFPPAPTAVPLHPSWAYVDPSSSSSYDNGFPTGDHELFTTFSWDDQKVRRVFVRKVYTILLIQLLVTLAVVALFTFCDPVKDYVQANPGWYWASYAVFFATYLTLACCSGPRRHFPWNLILLTVFTLSMAYLTGMLSSYYNTTSVLLCLGITALVCLSVTVFSFQTKFDFTSCQGVLFVLLMTLFFSGLILAILLPFQYVPWLHAVYAALGAGVFTLFLALDTQLLMGNRRHSLSPEEYIFGALNIYLDIIYIFTFFLQLFGTNRE.

A disordered region spans residues 1-53 (MTQGKLSVANKAPGTEGQQQVHGEKKEAPAVPSAPPSYEEATSGEGMKAGAFP). Transmembrane regions (helical) follow at residues 106 to 126 (VYTILLIQLLVTLAVVALFTF), 138 to 158 (PGWYWASYAVFFATYLTLACC), and 165 to 185 (FPWNLILLTVFTLSMAYLTGM). An N-linked (GlcNAc...) asparagine glycan is attached at asparagine 191. 4 helical membrane-spanning segments follow: residues 194–214 (SVLLCLGITALVCLSVTVFSF), 225–245 (GVLFVLLMTLFFSGLILAILL), 250–270 (VPWLHAVYAALGAGVFTLFLA), and 290–310 (IFGALNIYLDIIYIFTFFLQL).

This sequence belongs to the BI1 family. LFG subfamily. In terms of assembly, interacts with FAS/TNFRSF6 and BAX. As to expression, highly expressed in breast carcinoma tissues. Enhanced expression correlates with the grade of the tumor (grade II/grade III) in primary breast tumors (at protein level). Widely expressed. Expressed at high levels in the brain especially in the hippocampus.

It is found in the cell membrane. Its subcellular location is the membrane raft. It localises to the postsynaptic cell membrane. Antiapoptotic protein which protects cells uniquely from Fas-induced apoptosis. Regulates Fas-mediated apoptosis in neurons by interfering with caspase-8 activation. May play a role in cerebellar development by affecting cerebellar size, internal granular layer (IGL) thickness, and Purkinje cell (PC) development. This chain is Protein lifeguard 2 (FAIM2), found in Homo sapiens (Human).